The primary structure comprises 279 residues: Dermonecrotic toxin LspiSicTox-betaIE3ii (279 aa).

H5 is an active-site residue. Residues E25 and D27 each coordinate Mg(2+). H41 acts as the Nucleophile in catalysis. Intrachain disulfides connect C45-C51 and C47-C190. D85 contacts Mg(2+).

It belongs to the arthropod phospholipase D family. Class II subfamily. The cofactor is Mg(2+). In terms of tissue distribution, expressed by the venom gland.

It is found in the secreted. It catalyses the reaction an N-(acyl)-sphingosylphosphocholine = an N-(acyl)-sphingosyl-1,3-cyclic phosphate + choline. The catalysed reaction is an N-(acyl)-sphingosylphosphoethanolamine = an N-(acyl)-sphingosyl-1,3-cyclic phosphate + ethanolamine. It carries out the reaction a 1-acyl-sn-glycero-3-phosphocholine = a 1-acyl-sn-glycero-2,3-cyclic phosphate + choline. The enzyme catalyses a 1-acyl-sn-glycero-3-phosphoethanolamine = a 1-acyl-sn-glycero-2,3-cyclic phosphate + ethanolamine. In terms of biological role, dermonecrotic toxins cleave the phosphodiester linkage between the phosphate and headgroup of certain phospholipids (sphingolipid and lysolipid substrates), forming an alcohol (often choline) and a cyclic phosphate. This toxin acts on sphingomyelin (SM). It may also act on ceramide phosphoethanolamine (CPE), lysophosphatidylcholine (LPC) and lysophosphatidylethanolamine (LPE), but not on lysophosphatidylserine (LPS), and lysophosphatidylglycerol (LPG). It acts by transphosphatidylation, releasing exclusively cyclic phosphate products as second products. Induces dermonecrosis, hemolysis, increased vascular permeability, edema, inflammatory response, and platelet aggregation. The chain is Dermonecrotic toxin LspiSicTox-betaIE3ii from Loxosceles spinulosa (Recluse spider).